Here is a 106-residue protein sequence, read N- to C-terminus: Large ribosomal subunit protein uL24 (106 aa).

It belongs to the universal ribosomal protein uL24 family. As to quaternary structure, part of the 50S ribosomal subunit.

Its function is as follows. One of two assembly initiator proteins, it binds directly to the 5'-end of the 23S rRNA, where it nucleates assembly of the 50S subunit. Functionally, one of the proteins that surrounds the polypeptide exit tunnel on the outside of the subunit. In Gluconobacter oxydans (strain 621H) (Gluconobacter suboxydans), this protein is Large ribosomal subunit protein uL24.